Here is an 88-residue protein sequence, read N- to C-terminus: UPF0250 protein Sbal_3280 (88 aa).

This sequence belongs to the UPF0250 family.

This Shewanella baltica (strain OS155 / ATCC BAA-1091) protein is UPF0250 protein Sbal_3280.